Consider the following 218-residue polypeptide: Octanoyltransferase (218 aa).

One can recognise a BPL/LPL catalytic domain in the interval 45 to 218 (AGTADELWLL…TDALQRAIYS (174 aa)). Substrate contacts are provided by residues 84–91 (RGGQITYH), 151–153 (ALG), and 164–166 (GLA). Catalysis depends on Cys182, which acts as the Acyl-thioester intermediate.

Belongs to the LipB family.

It localises to the cytoplasm. The catalysed reaction is octanoyl-[ACP] + L-lysyl-[protein] = N(6)-octanoyl-L-lysyl-[protein] + holo-[ACP] + H(+). Its pathway is protein modification; protein lipoylation via endogenous pathway; protein N(6)-(lipoyl)lysine from octanoyl-[acyl-carrier-protein]: step 1/2. In terms of biological role, catalyzes the transfer of endogenously produced octanoic acid from octanoyl-acyl-carrier-protein onto the lipoyl domains of lipoate-dependent enzymes. Lipoyl-ACP can also act as a substrate although octanoyl-ACP is likely to be the physiological substrate. The protein is Octanoyltransferase of Thiobacillus denitrificans (strain ATCC 25259 / T1).